A 175-amino-acid chain; its full sequence is NADH-ubiquinone oxidoreductase chain 6 (175 aa).

The next 5 membrane-spanning stretches (helical) occupy residues Met1–Ser21, Ser25–Leu45, Phe47–Val67, Ala88–Leu108, and Tyr149–Met169.

It belongs to the complex I subunit 6 family. As to quaternary structure, core subunit of respiratory chain NADH dehydrogenase (Complex I) which is composed of 45 different subunits.

The protein resides in the mitochondrion inner membrane. It carries out the reaction a ubiquinone + NADH + 5 H(+)(in) = a ubiquinol + NAD(+) + 4 H(+)(out). Core subunit of the mitochondrial membrane respiratory chain NADH dehydrogenase (Complex I) which catalyzes electron transfer from NADH through the respiratory chain, using ubiquinone as an electron acceptor. Essential for the catalytic activity and assembly of complex I. The protein is NADH-ubiquinone oxidoreductase chain 6 (MT-ND6) of Bos indicus (Zebu).